Reading from the N-terminus, the 327-residue chain is Ribose-phosphate pyrophosphokinase (327 aa).

Residues 40 to 42 (DGE) and 99 to 100 (RQ) each bind ATP. Residues His134 and Asp173 each coordinate Mg(2+). Lys196 is a catalytic residue. D-ribose 5-phosphate is bound by residues Arg198, Asp222, and 226 to 230 (DTANT).

It belongs to the ribose-phosphate pyrophosphokinase family. Class I subfamily. Homohexamer. The cofactor is Mg(2+).

The protein localises to the cytoplasm. It catalyses the reaction D-ribose 5-phosphate + ATP = 5-phospho-alpha-D-ribose 1-diphosphate + AMP + H(+). It functions in the pathway metabolic intermediate biosynthesis; 5-phospho-alpha-D-ribose 1-diphosphate biosynthesis; 5-phospho-alpha-D-ribose 1-diphosphate from D-ribose 5-phosphate (route I): step 1/1. Involved in the biosynthesis of the central metabolite phospho-alpha-D-ribosyl-1-pyrophosphate (PRPP) via the transfer of pyrophosphoryl group from ATP to 1-hydroxyl of ribose-5-phosphate (Rib-5-P). This chain is Ribose-phosphate pyrophosphokinase, found in Neisseria meningitidis serogroup A / serotype 4A (strain DSM 15465 / Z2491).